Reading from the N-terminus, the 642-residue chain is ATP-dependent zinc metalloprotease FtsH (642 aa).

Over 1 to 6 the chain is Cytoplasmic; sequence MGRFTK. A helical membrane pass occupies residues 7-27; the sequence is NIVLYLLIIAAFVIAIDAFSG. Residues 28–101 are Extracellular-facing; the sequence is QSANKSELSY…TAAPPEQPAW (74 aa). A helical transmembrane segment spans residues 102–122; the sequence is WMSLLGSAIPIIILVVLFFFI. Over 123-642 the chain is Cytoplasmic; the sequence is MQQTQGGGGR…LSEASSNEIK (520 aa). Residue 194–201 coordinates ATP; it reads GPPGTGKT. His416 serves as a coordination point for Zn(2+). The active site involves Glu417. His420 and Asp492 together coordinate Zn(2+). Basic and acidic residues predominate over residues 597 to 610; it reads TTKEPEAEEPKVAS. The tract at residues 597-642 is disordered; it reads TTKEPEAEEPKVASEADSSIVPEGVDAKKTTSTVADLSEASSNEIK. The span at 626–642 shows a compositional bias: polar residues; it reads TTSTVADLSEASSNEIK.

In the central section; belongs to the AAA ATPase family. This sequence in the C-terminal section; belongs to the peptidase M41 family. Homohexamer. The cofactor is Zn(2+).

It localises to the cell membrane. Functionally, acts as a processive, ATP-dependent zinc metallopeptidase for both cytoplasmic and membrane proteins. Plays a role in the quality control of integral membrane proteins. This Veillonella parvula (strain ATCC 10790 / DSM 2008 / CCUG 5123 / JCM 12972 / NCTC 11810 / Te3) (Veillonella alcalescens) protein is ATP-dependent zinc metalloprotease FtsH.